Here is a 149-residue protein sequence, read N- to C-terminus: Large ribosomal subunit protein bL9 (149 aa).

The protein belongs to the bacterial ribosomal protein bL9 family.

Binds to the 23S rRNA. This chain is Large ribosomal subunit protein bL9, found in Helicobacter pylori (strain J99 / ATCC 700824) (Campylobacter pylori J99).